A 474-amino-acid polypeptide reads, in one-letter code: MTKKLHIKTWGCQMNEYDSSKMADLLDATHGYQLTEVAEEADVLLLNTCSIREKAQEKVFHQLGRWKLLKEKNPDLIIGVGGCVASQEGDHIRQRAHYVDIIFGPQTLHRLPEMINSVRGDRSPVVDISFPEIEKFDRLPEPRAEGPTAFVSIMEGCNKYCTYCVVPYTRGEEVSRPSDDILFEIAQLAAQGVREVNLLGQNVNAWRGENYDGTTGSFADLLRLVAAIDGIDRIRFTTSHPIEFTDDIIEVYRDTPELVSFLHLPVQSGADRVLNLMGRTHTALEYKAIIRKLRAARPDIQISSDFIVGFPGETTQDFEQTMKLIADVNFDMSYSFIFSARPGTPAADMVDDVPEEEKKQRLYILQERINQQAMAWSRRMLGTVQRILVEGTSRKSIMELSGRTENNRVVNFEGTPEMIGKFVDVEITDVYTNSLRGKVVRTEDEMGLRVAETPESVIARTRKENEIGVGFYQP.

An MTTase N-terminal domain is found at 3 to 120; the sequence is KKLHIKTWGC…LPEMINSVRG (118 aa). Residues Cys12, Cys49, Cys83, Cys157, Cys161, and Cys164 each contribute to the [4Fe-4S] cluster site. The 233-residue stretch at 143-375 folds into the Radical SAM core domain; the sequence is RAEGPTAFVS…QERINQQAMA (233 aa). The TRAM domain maps to 378 to 441; that stretch reads RRMLGTVQRI…TNSLRGKVVR (64 aa).

Belongs to the methylthiotransferase family. MiaB subfamily. As to quaternary structure, monomer. [4Fe-4S] cluster serves as cofactor.

It localises to the cytoplasm. It carries out the reaction N(6)-dimethylallyladenosine(37) in tRNA + (sulfur carrier)-SH + AH2 + 2 S-adenosyl-L-methionine = 2-methylsulfanyl-N(6)-dimethylallyladenosine(37) in tRNA + (sulfur carrier)-H + 5'-deoxyadenosine + L-methionine + A + S-adenosyl-L-homocysteine + 2 H(+). In terms of biological role, catalyzes the methylthiolation of N6-(dimethylallyl)adenosine (i(6)A), leading to the formation of 2-methylthio-N6-(dimethylallyl)adenosine (ms(2)i(6)A) at position 37 in tRNAs that read codons beginning with uridine. This Citrobacter koseri (strain ATCC BAA-895 / CDC 4225-83 / SGSC4696) protein is tRNA-2-methylthio-N(6)-dimethylallyladenosine synthase.